A 391-amino-acid chain; its full sequence is Protein CAJ1 (391 aa).

In terms of domain architecture, J spans 4-73 (ETEYYDILGI…RSKYDQFGKE (70 aa)). The tract at residues 119 to 161 (KEDEEGTAATETEKADESTDGGMVKHDTNKAESLKKDKLSKEQ) is disordered. A compositionally biased stretch (basic and acidic residues) spans 129–161 (ETEKADESTDGGMVKHDTNKAESLKKDKLSKEQ). Lysine 132 participates in a covalent cross-link: Glycyl lysine isopeptide (Lys-Gly) (interchain with G-Cter in ubiquitin).

This chain is Protein CAJ1 (CAJ1), found in Saccharomyces cerevisiae (strain ATCC 204508 / S288c) (Baker's yeast).